A 170-amino-acid chain; its full sequence is MQAYHLLLVCMYISCSAYTNASTAEDPNPNTYAEFSRMSHAAKDNGESNRALRTHNPDREERMMSLASLENWHAKLMGKTFEQVNSMFNKGKFNPPKGTTVGQATDWTWSKTIAFFEQMKKDNTTPESLKETLNIAQKEATMSAKALRKDPDYLMYNAFKTFWDNKSPGV.

The N-terminal stretch at 1 to 17 is a signal peptide; that stretch reads MQAYHLLLVCMYISCSA. Residues 50 to 62 carry the RxLR-dEER motif; sequence RALRTHNPDREER.

The protein belongs to the RxLR effector family.

It is found in the secreted. The protein localises to the host cytoplasm. Its subcellular location is the host nucleus. In terms of biological role, effector that enhances P.infestans colonization of Nicotiana benthamiana leaves. This chain is RxLR effector protein PITG_07555, found in Phytophthora infestans (strain T30-4) (Potato late blight agent).